Reading from the N-terminus, the 133-residue chain is Cell division protein FtsL (133 aa).

Residues 1 to 45 (MAVEKVYQPYDEQVYNSIPKQQPQTKPEKKTVSRKVVVQLTKFEK) lie on the Cytoplasmic side of the membrane. Residues 46–65 (VLYITLITVIAMLSIYMLSL) form a helical membrane-spanning segment. The Extracellular segment spans residues 66-133 (KMDAYDTRGK…VVRSNGEAKN (68 aa)).

This sequence belongs to the FtsL family.

The protein resides in the cell membrane. Its function is as follows. Essential cell division protein. This Staphylococcus aureus (strain NCTC 8325 / PS 47) protein is Cell division protein FtsL.